We begin with the raw amino-acid sequence, 465 residues long: VGFKAGVKDYKLTYYTPDYETLDTDILAAFRVTPQPGVPPEEAGAAVAAESSTGTWTTVWTDGLTSLDRYKGRCYHIEPVAGEENQYIAYVAYPLDLFEEGSVTNMFTSIVGNVFGFKALRALRLEDLRIPPAYSKTFQGPPHGIQVERDKLNKYGRPLLGCTIKPKLGLSAKNYGRAVYECLRGGLDFTKDDENVNSQPFMRWRDRFVFFAEALYKAQAETGEIKGHYLNATAGTCEEMIKRAVFARELGVPIVMHDYLTGGFTANTSLAHYCRDNGLLLHIHRAMHAVIDRQKNHGIHFRVLAKALRLSGGDHIHAGTVVGKLEGERDITLGFVDLLRDDYVEKDRSRGIYFTQFWVSIPGVLPVASGGIHVWHMPALTEIFGDDSVLQFGGGTLGHPWGNAPGAVANRVALEACVQARNEGRDLAREGNEIIREASKWSTELAAACEIWKEIKFVFEAMDTL.

Position 4 is an N6,N6,N6-trimethyllysine (Lys-4). Positions 113 and 163 each coordinate substrate. Residue Lys-165 is the Proton acceptor of the active site. Lys-167 is a binding site for substrate. Residues Lys-191, Asp-193, and Glu-194 each coordinate Mg(2+). Lys-191 is modified (N6-carboxylysine). Catalysis depends on His-284, which acts as the Proton acceptor. The substrate site is built by Arg-285, His-317, and Ser-369.

Belongs to the RuBisCO large chain family. Type I subfamily. In terms of assembly, heterohexadecamer of 8 large chains and 8 small chains; disulfide-linked. The disulfide link is formed within the large subunit homodimers. Mg(2+) serves as cofactor. The disulfide bond which can form in the large chain dimeric partners within the hexadecamer appears to be associated with oxidative stress and protein turnover.

Its subcellular location is the plastid. The protein resides in the chloroplast. It carries out the reaction 2 (2R)-3-phosphoglycerate + 2 H(+) = D-ribulose 1,5-bisphosphate + CO2 + H2O. It catalyses the reaction D-ribulose 1,5-bisphosphate + O2 = 2-phosphoglycolate + (2R)-3-phosphoglycerate + 2 H(+). In terms of biological role, ruBisCO catalyzes two reactions: the carboxylation of D-ribulose 1,5-bisphosphate, the primary event in carbon dioxide fixation, as well as the oxidative fragmentation of the pentose substrate in the photorespiration process. Both reactions occur simultaneously and in competition at the same active site. The chain is Ribulose bisphosphate carboxylase large chain from Nepenthes alata (Winged pitcher plant).